The chain runs to 241 residues: Proteasome subunit beta type-1 (241 aa).

M1 carries the post-translational modification N-acetylmethionine. The propeptide occupies 1–28; the sequence is MLSSVAAYSGAGRDLAMEPHSSVGPLQL. O-linked (GlcNAc) serine glycosylation is present at S58. S62 and S68 each carry phosphoserine. Y150 is subject to Phosphotyrosine. S162 carries the phosphoserine modification. The residue at position 204 (K204) is an N6-acetyllysine. S209 carries an O-linked (GlcNAc) serine glycan.

The protein belongs to the peptidase T1B family. In terms of assembly, the 26S proteasome consists of a 20S proteasome core and two 19S regulatory subunits. The 20S proteasome core is a barrel-shaped complex made of 28 subunits that are arranged in four stacked rings. The two outer rings are each formed by seven alpha subunits, and the two inner rings are formed by seven beta subunits. The proteolytic activity is exerted by three beta-subunits PSMB5, PSMB6 and PSMB7. Interacts with SERPINB2. Interacts with RFPL4A.

It is found in the cytoplasm. Its subcellular location is the nucleus. Functionally, non-catalytic component of the 20S core proteasome complex involved in the proteolytic degradation of most intracellular proteins. This complex plays numerous essential roles within the cell by associating with different regulatory particles. Associated with two 19S regulatory particles, forms the 26S proteasome and thus participates in the ATP-dependent degradation of ubiquitinated proteins. The 26S proteasome plays a key role in the maintenance of protein homeostasis by removing misfolded or damaged proteins that could impair cellular functions, and by removing proteins whose functions are no longer required. Associated with the PA200 or PA28, the 20S proteasome mediates ubiquitin-independent protein degradation. This type of proteolysis is required in several pathways including spermatogenesis (20S-PA200 complex) or generation of a subset of MHC class I-presented antigenic peptides (20S-PA28 complex). In Bos taurus (Bovine), this protein is Proteasome subunit beta type-1 (PSMB1).